The sequence spans 349 residues: FK506-binding protein-like (349 aa).

Thr-3 carries the post-translational modification Phosphothreonine. The interval 36 to 55 (RQQPRDPPTETLELEVSPDP) is disordered. 3 TPR repeats span residues 210–243 (AREERARGTELFRAGNPEGAARCYGRALRLLLTL), 252–285 (TVLHANLAACQLLLGQPQLAAQSCDRVLEREPGH), and 286–319 (LKALYRRGVAQAALGNLEKATADLKKVLAIDPKN).

Forms a ternary complex with CDKN1A/p21 and HSP90AB1/Hsp90. As to expression, ubiquitously expressed with higher levels in testis.

In terms of biological role, may be involved in response to X-ray. Regulates p21 protein stability by binding to Hsp90 and p21. This is FK506-binding protein-like (FKBPL) from Homo sapiens (Human).